The primary structure comprises 460 residues: DNA repair protein RadA (460 aa).

A C4-type zinc finger spans residues 11–28 (CNECGADYPRWQGQCSAC). 102–109 (GNPGAGKS) lines the ATP pocket. Residues 258–262 (KNRFG) carry the RadA KNRFG motif motif. The segment at 357–460 (DVFVNVVGGV…SDALSVFDDL (104 aa)) is lon-protease-like.

Belongs to the RecA family. RadA subfamily.

Its function is as follows. DNA-dependent ATPase involved in processing of recombination intermediates, plays a role in repairing DNA breaks. Stimulates the branch migration of RecA-mediated strand transfer reactions, allowing the 3' invading strand to extend heteroduplex DNA faster. Binds ssDNA in the presence of ADP but not other nucleotides, has ATPase activity that is stimulated by ssDNA and various branched DNA structures, but inhibited by SSB. Does not have RecA's homology-searching function. Genetic experiments involving combination of radA mutations with mutations in recA, recB, recG, recJ, recQ, ruvA and ruvC show it plays a role in recombination and recombinational repair, probably involving stabilizing or processing branched DNA or blocked replication forks. Is genetically synergistic to RecG and RuvABC. May be involved in recovery of genetic rearrangements during replication fork breakdown. In combination with RadD is important in recovery from double-strand DNA breaks (DSB). This is DNA repair protein RadA from Escherichia coli (strain K12).